The chain runs to 136 residues: Large ribosomal subunit protein eL27B (136 aa).

It belongs to the eukaryotic ribosomal protein eL27 family. As to quaternary structure, component of the large ribosomal subunit (LSU). Mature yeast ribosomes consist of a small (40S) and a large (60S) subunit. The 40S small subunit contains 1 molecule of ribosomal RNA (18S rRNA) and 33 different proteins (encoded by 57 genes). The large 60S subunit contains 3 rRNA molecules (25S, 5.8S and 5S rRNA) and 46 different proteins (encoded by 81 genes).

Its subcellular location is the cytoplasm. Functionally, component of the ribosome, a large ribonucleoprotein complex responsible for the synthesis of proteins in the cell. The small ribosomal subunit (SSU) binds messenger RNAs (mRNAs) and translates the encoded message by selecting cognate aminoacyl-transfer RNA (tRNA) molecules. The large subunit (LSU) contains the ribosomal catalytic site termed the peptidyl transferase center (PTC), which catalyzes the formation of peptide bonds, thereby polymerizing the amino acids delivered by tRNAs into a polypeptide chain. The nascent polypeptides leave the ribosome through a tunnel in the LSU and interact with protein factors that function in enzymatic processing, targeting, and the membrane insertion of nascent chains at the exit of the ribosomal tunnel. The chain is Large ribosomal subunit protein eL27B from Saccharomyces cerevisiae (strain ATCC 204508 / S288c) (Baker's yeast).